The sequence spans 75 residues: Vacuolar ATPase assembly integral membrane protein VMA21 (75 aa).

Over 1–8 the chain is Cytoplasmic; sequence MPVDVAPG. Residues 9–29 traverse the membrane as a helical segment; sequence VIKKLMFFTAAMVICPLLTFF. Topologically, residues 30-41 are lumenal; the sequence is SIKQFTTNTIVS. Residues 42–62 traverse the membrane as a helical segment; it reads GGLAALAANLVLIGYIVVAFM. Topologically, residues 63 to 75 are cytoplasmic; sequence EDTTDVKAESKKD.

Belongs to the VMA21 family.

The protein localises to the endoplasmic reticulum membrane. It is found in the endoplasmic reticulum-Golgi intermediate compartment membrane. Its subcellular location is the cytoplasmic vesicle. It localises to the COPII-coated vesicle membrane. In terms of biological role, required for the assembly of the V0 complex of the vacuolar ATPase (V-ATPase) in the endoplasmic reticulum. The protein is Vacuolar ATPase assembly integral membrane protein VMA21 of Vanderwaltozyma polyspora (strain ATCC 22028 / DSM 70294 / BCRC 21397 / CBS 2163 / NBRC 10782 / NRRL Y-8283 / UCD 57-17) (Kluyveromyces polysporus).